The chain runs to 102 residues: Large ribosomal subunit protein bL21 (102 aa).

The protein belongs to the bacterial ribosomal protein bL21 family. As to quaternary structure, part of the 50S ribosomal subunit. Contacts protein L20.

Its function is as follows. This protein binds to 23S rRNA in the presence of protein L20. The polypeptide is Large ribosomal subunit protein bL21 (Enterococcus faecalis (strain ATCC 700802 / V583)).